We begin with the raw amino-acid sequence, 489 residues long: Retinoblastoma-binding protein 5 homolog (489 aa).

6 WD repeats span residues 22-63, 64-103, 147-187, 195-234, 248-290, and 292-330; these read DCIS…KIIS, AHVHPVCSLSWTRNGHKLLSASTDNNVCIWDVLTGELEHK, DSDG…VVAS, SSATAVKSIEFARRGDAFLINTSDRVIRVYDSKEIITLGK, VNKT…KILH, and TKGELLLDVVWHPVRPIIASISSGLVSIWAQNQVENWSA. The disordered stretch occupies residues 451–489; sequence DVSLPDAPTDETHPLISSKASKDKQQPVGGKKAAGRTKK.

As to quaternary structure, core component of several methyltransferase-containing complexes. Component of the SET1 complex, composed at least of the catalytic subunit Set1, wds/WDR5, Wdr82, Rbbp5, ash2, Cfp1/CXXC1, hcf and Dpy-30L1. Component of the MLL3/4 complex composed at least of the catalytic subunit trr, ash2, Rbbp5, Dpy-30L1, wds, hcf, ptip, Pa1, Utx, Lpt and Ncoa6.

The protein localises to the nucleus. Functionally, component of the SET1 complex that specifically di- and trimethylates 'Lys-4' of histone H3 and of the MLL3/4 complex which also methylates histone H3 'Lys-4'. This Drosophila melanogaster (Fruit fly) protein is Retinoblastoma-binding protein 5 homolog.